The sequence spans 423 residues: Tyrosine--tRNA ligase (423 aa).

Position 35 (Tyr35) interacts with L-tyrosine. A 'HIGH' region motif is present at residues 40–49; that stretch reads PTAASLHVGH. Tyr170 and Gln174 together coordinate L-tyrosine. A 'KMSKS' region motif is present at residues 231 to 235; it reads KFGKS. An ATP-binding site is contributed by Lys234. The 67-residue stretch at 353 to 419 folds into the S4 RNA-binding domain; it reads GPLVDLLVEV…GKKNLAAVEV (67 aa).

It belongs to the class-I aminoacyl-tRNA synthetase family. TyrS type 1 subfamily. Homodimer.

It is found in the cytoplasm. The enzyme catalyses tRNA(Tyr) + L-tyrosine + ATP = L-tyrosyl-tRNA(Tyr) + AMP + diphosphate + H(+). In terms of biological role, catalyzes the attachment of tyrosine to tRNA(Tyr) in a two-step reaction: tyrosine is first activated by ATP to form Tyr-AMP and then transferred to the acceptor end of tRNA(Tyr). The chain is Tyrosine--tRNA ligase from Streptomyces griseus subsp. griseus (strain JCM 4626 / CBS 651.72 / NBRC 13350 / KCC S-0626 / ISP 5235).